The sequence spans 377 residues: Cobalt-precorrin-5B C(1)-methyltransferase (377 aa).

The protein belongs to the CbiD family.

The catalysed reaction is Co-precorrin-5B + S-adenosyl-L-methionine = Co-precorrin-6A + S-adenosyl-L-homocysteine. It functions in the pathway cofactor biosynthesis; adenosylcobalamin biosynthesis; cob(II)yrinate a,c-diamide from sirohydrochlorin (anaerobic route): step 6/10. Its function is as follows. Catalyzes the methylation of C-1 in cobalt-precorrin-5B to form cobalt-precorrin-6A. In Alkaliphilus metalliredigens (strain QYMF), this protein is Cobalt-precorrin-5B C(1)-methyltransferase.